Here is a 112-residue protein sequence, read N- to C-terminus: Colipase (112 aa).

An N-terminal signal peptide occupies residues 1–17 (MEKILVLLLVALAVVYA). Residues 18–22 (VPDPR) constitute a propeptide, enterostatin, activation peptide. Intrachain disulfides connect cysteine 34–cysteine 45, cysteine 40–cysteine 56, cysteine 44–cysteine 78, cysteine 66–cysteine 86, and cysteine 80–cysteine 104.

This sequence belongs to the colipase family. Forms a 1:1 stoichiometric complex with pancreatic lipase. In terms of tissue distribution, expressed by the pancreas.

It localises to the secreted. In terms of biological role, colipase is a cofactor of pancreatic lipase. It allows the lipase to anchor itself to the lipid-water interface. Without colipase the enzyme is washed off by bile salts, which have an inhibitory effect on the lipase. Its function is as follows. Enterostatin has a biological activity as a satiety signal. This is Colipase (CLPS) from Canis lupus familiaris (Dog).